Consider the following 156-residue polypeptide: EPIDERMAL PATTERNING FACTOR-like protein 6 (156 aa).

The N-terminal stretch at 1–47 is a signal peptide; the sequence is MGFERTSSSLSLLSSSLPSSLQPSENTRAKFSLFYLLLLFFVLCVIA. Disulfide bonds link cysteine 113-cysteine 147, cysteine 117-cysteine 123, and cysteine 120-cysteine 149.

Belongs to the plant cysteine rich small secretory peptide family. Epidermal patterning factor subfamily. As to quaternary structure, interacts with ERECTA. As to expression, expressed in the internal layers of the root, hypocotyl and stems, and in the midrib of developing rosette leaves. Detected in a ring of cells surrounding the vascular elements. Expressed in developing stems soon after bolting, in inflorescence stems, near the root apex and in the chalazal region of ovules. Not found in cotyledons or in stomatal precursors or stomata.

It localises to the secreted. In terms of biological role, acts primarily as positive regulator of inflorescence growth. Endodermal expression is sufficient for proper inflorescence architecture. Redundantly involved with EPFL4 in procambial development regulation. Also acts as tissue-specific regulator of epidermal pattern. Controls stomatal patterning by repressing stomatal production. TMM (AC Q9SSD1) functions to dampen or block CHAL signaling. Not processed by SDD1 (AC O64495). Acts as growth-regulatory ligand for ERECTA family receptors. In Arabidopsis thaliana (Mouse-ear cress), this protein is EPIDERMAL PATTERNING FACTOR-like protein 6.